The following is a 334-amino-acid chain: Ribosomal lysine N-methyltransferase 5 (334 aa).

S-adenosyl-L-methionine contacts are provided by residues W88, 155-157 (GAG), D177, W227, and M254.

The protein belongs to the class I-like SAM-binding methyltransferase superfamily. RKM5 family.

In terms of biological role, S-adenosyl-L-methionine-dependent protein-lysine N-methyltransferase that methylates 60S ribosomal protein L1. This Lachancea thermotolerans (strain ATCC 56472 / CBS 6340 / NRRL Y-8284) (Yeast) protein is Ribosomal lysine N-methyltransferase 5 (RKM5).